Reading from the N-terminus, the 363-residue chain is Phosphoserine aminotransferase (363 aa).

L-glutamate is bound at residue R42. Residues 76–77 (AR), W104, T155, D175, and Q198 each bind pyridoxal 5'-phosphate. K199 carries the N6-(pyridoxal phosphate)lysine modification. Residue 240 to 241 (NT) coordinates pyridoxal 5'-phosphate.

Belongs to the class-V pyridoxal-phosphate-dependent aminotransferase family. SerC subfamily. In terms of assembly, homodimer. The cofactor is pyridoxal 5'-phosphate.

The protein resides in the cytoplasm. The enzyme catalyses O-phospho-L-serine + 2-oxoglutarate = 3-phosphooxypyruvate + L-glutamate. It carries out the reaction 4-(phosphooxy)-L-threonine + 2-oxoglutarate = (R)-3-hydroxy-2-oxo-4-phosphooxybutanoate + L-glutamate. It functions in the pathway amino-acid biosynthesis; L-serine biosynthesis; L-serine from 3-phospho-D-glycerate: step 2/3. The protein operates within cofactor biosynthesis; pyridoxine 5'-phosphate biosynthesis; pyridoxine 5'-phosphate from D-erythrose 4-phosphate: step 3/5. Functionally, catalyzes the reversible conversion of 3-phosphohydroxypyruvate to phosphoserine and of 3-hydroxy-2-oxo-4-phosphonooxybutanoate to phosphohydroxythreonine. The chain is Phosphoserine aminotransferase (serC) from Edwardsiella ictaluri (strain 93-146).